Here is a 221-residue protein sequence, read N- to C-terminus: Large ribosomal subunit protein uL1 (221 aa).

It belongs to the universal ribosomal protein uL1 family. As to quaternary structure, part of the 50S ribosomal subunit.

In terms of biological role, probably involved in E site tRNA release. Binds directly to 23S rRNA. Its function is as follows. Protein L1 is also a translational repressor protein, it controls the translation of its operon by binding to its mRNA. This chain is Large ribosomal subunit protein uL1, found in Sulfolobus acidocaldarius (strain ATCC 33909 / DSM 639 / JCM 8929 / NBRC 15157 / NCIMB 11770).